The chain runs to 860 residues: MVSIAFYGGIPGGISTPITQQSEKSKCEENTIFQPYCYNNNSKNSMAESKEARDQEMNLKEESKEEKRRNDWWKIGMFLLCLAGTTGGILWWYEGLPQQHYIGLVAIGGRLNGSGQSNAIECWGSFPGCRPFQNYFSYETNRSMHMDNDTATLLEAYHREITFIYKSSCTDSDHCQEYQCKQVNLNSSDPSNSVRVEDVTNTTEYWGFKWLECNQTENFKTILVPENEMVKINDNDTWIPKGCNETWARVKRCPIDILYGIHPIRLSVQPPFFLVQEKGTADTSRIGNCGPTIFLGVLEDNKGVVRGNGTACKVSDLNINRKDYTGIYQVPIFYTCNFTNITSCNNESIISVIMYETNQVQYLLCNNNNNSNNYNCVVQSFGVIGQAHLELPRPNKRIRNQSFNQYNCSINNKTELETWKLVNTSGITPLPISSEANTGLIRHKRDFGISAIVAAIVAATAIAASATMSYVALTEVNKIMEVQNHTFEVENSTLNGMDLIEQQIKILYAMILQTHADVQLLKEKQQVEETFNLIGCIERTHVFCHTGHPWNMSWGHLNESTQWDDWVSKMEDLNQEILTTLHGARNNLAQSMITFNTPDSIAQFGKDLWSHIGNWIPGLGASIIKYIVMFLLIYLLLTSSPKILRALWKVTSGAGSSGSRYLKKKFYHKHASREDTWDQAQHNIHLAGVTGGSGNKYCKQKYSRNDWNGESEEYNRRPKSWVKSIETFGESYISEKTKGEISQPGAAINEHKNGSGGNNPHQGSLDLEIRSEGGNIYDCCIKAQEGTLAIPCCGFPLWLFWGLVIIVGRIAGYGLRGFAVIIRICIRGLNLIFEIIRKMLDYIGRALNPGTSHVSMPQYV.

A propeptide spanning residues Met-1–Phe-6 is cleaved from the precursor. At Tyr-7–Asn-614 the chain is on the extracellular side. N-linked (GlcNAc...) asparagine; by host glycans are attached at residues Asn-40, Asn-112, Asn-141, Asn-148, Asn-186, Asn-201, Asn-214, Asn-235, Asn-244, Asn-308, Asn-337, Asn-340, Asn-346, Asn-369, Asn-400, Asn-407, Asn-412, and Asn-423. Residues Phe-447–Thr-467 form a fusion peptide region. Asn-484 and Asn-491 each carry an N-linked (GlcNAc...) asparagine; by host glycan. An immunosuppression region spans residues Leu-499 to Thr-514. 2 N-linked (GlcNAc...) asparagine; by host glycosylation sites follow: Asn-551 and Asn-558. Coiled coils occupy residues Ile-577–Lys-625 and Lys-664–Gln-700. The helical transmembrane segment at Trp-615–Leu-635 threads the bilayer. Over Leu-636–Val-860 the chain is Cytoplasmic. The interval Ala-746–Leu-765 is disordered.

In terms of assembly, the mature envelope protein (Env) consists of a trimer of SU-TM heterodimers attached by noncovalent interactions or by a labile interchain disulfide bond. In terms of processing, specific enzymatic cleavages in vivo yield mature proteins. Envelope glycoproteins are synthesized as an inactive precursor that is N-glycosylated and processed likely by host cell furin or by a furin-like protease in the Golgi to yield the mature SU and TM proteins. The cleavage site between SU and TM requires the minimal sequence [KR]-X-[KR]-R.

It localises to the virion membrane. The protein resides in the host cell membrane. The surface protein (SU) attaches the virus to the host cell by binding to its receptor. This interaction triggers the refolding of the transmembrane protein (TM) and is thought to activate its fusogenic potential by unmasking its fusion peptide. Fusion occurs at the host cell plasma membrane. Its function is as follows. The transmembrane protein (TM) acts as a class I viral fusion protein. Under the current model, the protein has at least 3 conformational states: pre-fusion native state, pre-hairpin intermediate state, and post-fusion hairpin state. During viral and target cell membrane fusion, the coiled coil regions (heptad repeats) assume a trimer-of-hairpins structure, positioning the fusion peptide in close proximity to the C-terminal region of the ectodomain. The formation of this structure appears to drive apposition and subsequent fusion of viral and target cell membranes. Membranes fusion leads to delivery of the nucleocapsid into the cytoplasm. This chain is Envelope glycoprotein (env), found in Equine infectious anemia virus (isolate P3.2-5) (EIAV).